The following is a 409-amino-acid chain: Glycosyltransferase GtfE (409 aa).

Belongs to the glycosyltransferase 28 family.

It functions in the pathway antibiotic biosynthesis; vancomycin biosynthesis. D-glucosyltransferase that acts on the aglycone core, transferring D-glucose to the phenolic hydroxyl of OH-Phegly(4) to form a devancoaminyl-vancomycin (DVV) intermediate in the biosynthesis of glycopeptide antibiotic vancomycin. Also able to glycosylate A47934, an antibiotic with a teicoplanin-like heptapeptide, but lacking sugar residues. The protein is Glycosyltransferase GtfE (gtfE) of Amycolatopsis orientalis (Nocardia orientalis).